The sequence spans 929 residues: Autophagy-related protein 13 (929 aa).

5 disordered regions span residues 1–66, 342–487, 503–581, 600–770, and 808–929; these read MNPY…AETD, AAAP…PRNR, LPND…RSED, FNRS…PDMF, and LASA…WGGR. A compositionally biased stretch (polar residues) spans 8–29; sequence SPRTASPASNLQTNPTRTNNPR. Basic and acidic residues predominate over residues 55 to 66; the sequence is MASRGDHMAETD. 4 stretches are compositionally biased toward polar residues: residues 368 to 385, 412 to 437, 476 to 487, and 551 to 566; these read GSLSTFHQVGPPTGTSPI, RTAQGSKSSLRSNDTSSFQRRTSVSF, IVPNSLNQPRNR, and GKGSATSSLQRGSDTL. Basic and acidic residues predominate over residues 600-612; it reads FNRSDSSTRDATM. The span at 635-656 shows a compositional bias: low complexity; the sequence is SVSSSTMLHRSSSSSSRQLSSV. Residues 702-714 are compositionally biased toward basic residues; sequence RSRNHRSRSRSGR. A compositionally biased stretch (acidic residues) spans 723-735; that stretch reads NLEEQSEVEDDAA. 2 stretches are compositionally biased toward polar residues: residues 749–761 and 830–847; these read QRRSSSVAQQNRN and ASSTSNTPAKRGTYSSNL. Low complexity-rich tracts occupy residues 855–871 and 912–929; these read SQGSSTTGSTGGTSSTE and GGSSTGSARGRNSPWGGR.

This sequence belongs to the ATG13 family. Fungi subfamily. Interacts with ATG1 to form the ATG1-ATG13 kinase complex.

Its subcellular location is the cytoplasm. The protein resides in the preautophagosomal structure. Its function is as follows. Activates the ATG1 kinase in a nutritional condition dependent manner through the TOR pathway, leading to autophagy. Also involved in cytoplasm to vacuole transport (Cvt) and more specifically in Cvt vesicle formation. Seems to play a role in the switching machinery regulating the conversion between the Cvt pathway and autophagy. Finally, ATG13 is also required for glycogen storage during stationary phase. This is Autophagy-related protein 13 (ATG13) from Phaeosphaeria nodorum (strain SN15 / ATCC MYA-4574 / FGSC 10173) (Glume blotch fungus).